The chain runs to 229 residues: Enolase-phosphatase E1 (229 aa).

Over residues 208-218 (DTQSTHRQVSS) the composition is skewed to polar residues. The disordered stretch occupies residues 208-229 (DTQSTHRQVSSFDDIHPEQIPT). Positions 220 to 229 (DDIHPEQIPT) are enriched in basic and acidic residues.

The protein belongs to the HAD-like hydrolase superfamily. MasA/MtnC family. Monomer. Requires Mg(2+) as cofactor.

It carries out the reaction 5-methylsulfanyl-2,3-dioxopentyl phosphate + H2O = 1,2-dihydroxy-5-(methylsulfanyl)pent-1-en-3-one + phosphate. It participates in amino-acid biosynthesis; L-methionine biosynthesis via salvage pathway; L-methionine from S-methyl-5-thio-alpha-D-ribose 1-phosphate: step 3/6. It functions in the pathway amino-acid biosynthesis; L-methionine biosynthesis via salvage pathway; L-methionine from S-methyl-5-thio-alpha-D-ribose 1-phosphate: step 4/6. Its function is as follows. Bifunctional enzyme that catalyzes the enolization of 2,3-diketo-5-methylthiopentyl-1-phosphate (DK-MTP-1-P) into the intermediate 2-hydroxy-3-keto-5-methylthiopentenyl-1-phosphate (HK-MTPenyl-1-P), which is then dephosphorylated to form the acireductone 1,2-dihydroxy-3-keto-5-methylthiopentene (DHK-MTPene). The polypeptide is Enolase-phosphatase E1 (Cronobacter sakazakii (strain ATCC BAA-894) (Enterobacter sakazakii)).